Here is a 141-residue protein sequence, read N- to C-terminus: Transcriptional regulator MraZ (141 aa).

SpoVT-AbrB domains are found at residues 5 to 47 (EFEH…PAER) and 76 to 119 (AAEC…GAEH).

The protein belongs to the MraZ family. As to quaternary structure, forms oligomers.

Its subcellular location is the cytoplasm. The protein localises to the nucleoid. This chain is Transcriptional regulator MraZ, found in Lactiplantibacillus plantarum (strain ATCC BAA-793 / NCIMB 8826 / WCFS1) (Lactobacillus plantarum).